The primary structure comprises 786 residues: Rho GTPase-activating protein 10 (786 aa).

The 256-residue stretch at 7 to 262 (EFSDCYLDSP…IRQNPKDQKR (256 aa)) folds into the BAR domain. Residues 265–372 (QFTAEGYLYV…WLEALGGKEA (108 aa)) enclose the PH domain. A Rho-GAP domain is found at 389–574 (AQLDKMGFTI…ILIENHEKIF (186 aa)). Disordered stretches follow at residues 584–609 (EPTCLSASPPNAPPRQSKRQGQRTKR) and 622–714 (EGDS…PFPL). Residues 599–609 (QSKRQGQRTKR) are compositionally biased toward basic residues. Residues 634–649 (PSSSQDSLSTPSPTTS) show a composition bias toward low complexity. Residues 673–701 (TATTPSQTRPSMVQWLNMQSPTTPSSNPA) are compositionally biased toward polar residues. Residues 702–714 (GTPPSPRMSPFPL) show a composition bias toward pro residues. One can recognise an SH3 domain in the interval 728-786 (VINRKARAVYPCEAEHSSELSFEIGAIFEDVQTSREPGWLEGTLNGKRGLIPQNYVKLL).

In terms of assembly, interacts with PKN3. Interacts with caspase-activated PAK2 proteolytic fragment PAK-2p34; the interaction does not affect ARHGAP10 GTPase activation activity towards RHOA and CDC42. Interacts via its SH3 domain with PTK2/FAK1. Interacts with PTK2B/PYK2; the interaction negatively regulates ARHGAP10 GTPase-activating activity. Interacts with MICAL1 and WDR44; complex formation might transit from GRAF2/ARHGAP10-MICAL1 to GRAF2/ARHGAP10-WDR44 complexes. Phosphorylated on tyrosine residues, probably involving PTK2B/PYK2. As to expression, high levels of expression in brain, testes, liver, heart and kidney.

Its subcellular location is the cytoplasm. It is found in the perinuclear region. The protein localises to the cell membrane. The protein resides in the endosome membrane. GTPase-activating protein that catalyzes the conversion of active GTP-bound Rho GTPases to their inactive GDP-bound form, thus suppressing various Rho GTPase-mediated cellular processes. Also converts Cdc42 to an inactive GDP-bound state. Essential for PTKB2 regulation of cytoskeletal organization via Rho family GTPases. Inhibits PAK2 proteolytic fragment PAK-2p34 kinase activity and changes its localization from the nucleus to the perinuclear region. Stabilizes PAK-2p34 thereby increasing stimulation of cell death. Associates with MICAL1 on the endosomal membrane to promote Rab8-Rab10-dependent tubule extension. After dissociation with MICAL1, recruits WDR44 which connects the endoplasmic reticulum (ER) with the endosomal tubule, thereby participating in the export of a subset of neosynthesized proteins. The polypeptide is Rho GTPase-activating protein 10 (Arhgap10) (Mus musculus (Mouse)).